The sequence spans 203 residues: MKAKLVSLLAQANIKISDQQIQQLINLVNLLNKWNKAYNLTSVRDPQEMLVKHILDSLVVSPYLQGDRFIDVGTGPGLPGLPLAIINPSKQFVLLDSLGKRISFIRNAIRELRLTNVTPVLSRVEEYQPEDKFDGVLSRAFASLKDMTDWCHHLPKENGYFYALKGIYQEDEINELNKKYTIQKVIELSVPELIGERHLIVLR.

S-adenosyl-L-methionine contacts are provided by residues glycine 73, leucine 78, 124–125, and arginine 139; that span reads VE.

Belongs to the methyltransferase superfamily. RNA methyltransferase RsmG family.

The protein localises to the cytoplasm. It carries out the reaction guanosine(527) in 16S rRNA + S-adenosyl-L-methionine = N(7)-methylguanosine(527) in 16S rRNA + S-adenosyl-L-homocysteine. Specifically methylates the N7 position of guanine in position 527 of 16S rRNA. The chain is Ribosomal RNA small subunit methyltransferase G from Haemophilus influenzae (strain 86-028NP).